Reading from the N-terminus, the 1291-residue chain is Cytoplasmic FMR1-interacting protein (1291 aa).

Residues 1270-1291 are disordered; sequence PSVISSSSHYQDPQKLRQSINN. Residues 1271 to 1291 are compositionally biased toward polar residues; it reads SVISSSSHYQDPQKLRQSINN.

This sequence belongs to the CYFIP family. As to quaternary structure, interacts with Fmr1 and Rac1. Component of the WAVE complex composed of Hem/Kette, Scar/Wave and Cyfip where it binds through its C-terminus directly to Hem. In the embryo, expressed mainly in the gut and in the developing central nervous system where high levels of expression are found in the CNS neuropile. Expression in the gut diminishes as development proceeds (at protein level). In the adult, expressed specifically in the nervous system.

It is found in the cytoplasm. Functionally, plays a role in guidance and morphology of central and peripheral axons and in synaptic morphology. Also required for formation of cell membrane protrusions and for bristle development. Plays a role in regulating mitochondrial activity, energy metabolism and membrane potential which maintains normal gamma-aminobutyric acid (GABA) signaling and ensures normal social behavior. The polypeptide is Cytoplasmic FMR1-interacting protein (Drosophila melanogaster (Fruit fly)).